Here is a 513-residue protein sequence, read N- to C-terminus: GMP synthase [glutamine-hydrolyzing] (513 aa).

The 191-residue stretch at 8-198 folds into the Glutamine amidotransferase type-1 domain; the sequence is KIIVLDYGSQ…ALNTCGAKGN (191 aa). Catalysis depends on C85, which acts as the Nucleophile. Active-site residues include H172 and E174. A GMPS ATP-PPase domain is found at 199–388; that stretch reads WSMENFIDMQ…LGMPDEIVWR (190 aa). 226-232 contributes to the ATP binding site; that stretch reads SGGVDSS.

As to quaternary structure, homodimer.

It carries out the reaction XMP + L-glutamine + ATP + H2O = GMP + L-glutamate + AMP + diphosphate + 2 H(+). Its pathway is purine metabolism; GMP biosynthesis; GMP from XMP (L-Gln route): step 1/1. Its function is as follows. Catalyzes the synthesis of GMP from XMP. The sequence is that of GMP synthase [glutamine-hydrolyzing] from Lactococcus lactis subsp. cremoris (strain SK11).